The following is a 271-amino-acid chain: RELT-like protein 1 (271 aa).

Residues 1 to 23 (MAPRALPGSAVLAAAVFVGGAVS) form the signal peptide. At 24-57 (SPLVAPDNGSSRTLHSRTETTPSPSNDTGNGHPE) the chain is on the extracellular side. The segment at 28–53 (APDNGSSRTLHSRTETTPSPSNDTGN) is disordered. N-linked (GlcNAc...) asparagine glycosylation is found at N31 and N49. Polar residues predominate over residues 31–52 (NGSSRTLHSRTETTPSPSNDTG). The helical transmembrane segment at 58–78 (YIAYALVPVFFIMGLFGVLIC) threads the bilayer. Residues 79–271 (HLLKKKGYRC…PVKRERSGTE (193 aa)) lie on the Cytoplasmic side of the membrane. The stretch at 89-113 (TTEAEQDIEEEKVEKIELNDSVNEN) forms a coiled coil. S109 and S114 each carry phosphoserine. Disordered regions lie at residues 145-173 (DPES…TPGK) and 233-271 (VEHK…SGTE). Residues 155–165 (PGSPPVSPGPL) are compositionally biased toward pro residues. The span at 233–244 (VEHKSNQKERRS) shows a compositional bias: basic and acidic residues. Residues S244 and S247 each carry the phosphoserine modification.

It belongs to the RELT family. As to quaternary structure, interacts with RELT, RELL2 and OXSR1. Interacts with PLSCR1. In terms of processing, phosphorylated in vitro by OXSR1. As to expression, widely expressed. Expressed at highest levels in the placenta, skeletal muscle, spleen and testis.

The protein localises to the cell membrane. In terms of biological role, induces activation of MAPK14/p38 cascade, when overexpressed. Induces apoptosis, when overexpressed. The chain is RELT-like protein 1 (RELL1) from Homo sapiens (Human).